A 68-amino-acid polypeptide reads, in one-letter code: Protein RH1 (68 aa).

This is Protein RH1 from Pantherophis guttatus (Corn snake).